We begin with the raw amino-acid sequence, 519 residues long: 2,3-bisphosphoglycerate-independent phosphoglycerate mutase (519 aa).

Mn(2+) contacts are provided by D18 and S68. The active-site Phosphoserine intermediate is S68. Substrate is bound by residues H129, 159–160 (RD), R191, R197, 267–270 (RADR), and K341. The Mn(2+) site is built by D408, H412, D449, H450, and H468.

Belongs to the BPG-independent phosphoglycerate mutase family. As to quaternary structure, monomer. Mn(2+) is required as a cofactor.

The enzyme catalyses (2R)-2-phosphoglycerate = (2R)-3-phosphoglycerate. It functions in the pathway carbohydrate degradation; glycolysis; pyruvate from D-glyceraldehyde 3-phosphate: step 3/5. Its function is as follows. Catalyzes the interconversion of 2-phosphoglycerate and 3-phosphoglycerate. The protein is 2,3-bisphosphoglycerate-independent phosphoglycerate mutase of Coxiella burnetii (strain RSA 331 / Henzerling II).